Here is a 421-residue protein sequence, read N- to C-terminus: General transcription factor IIH subunit 2 (421 aa).

Residues 1 to 26 (MSNQRKRSNDEREEEDDEDAEGIGEW) are disordered. Residues 11-24 (EREEEDDEDAEGIG) are compositionally biased toward acidic residues. The region spanning 83–272 (YLYIVIDFSR…IAEFAIANLI (190 aa)) is the VWFA domain. An RING-type zinc finger spans residues 362–408 (CFGCQQSLIGAGNKPVPCVTCRKCKHYFCLDCDIYIHESLHNCPGCE).

This sequence belongs to the GTF2H2 family. In terms of assembly, component of the 7-subunit TFIIH core complex composed of XPB, XPD, TFB1/GTF2H1, GTF2H2/P44, TFB4/GTF2H3, TFB2/GTF2H4 and TFB5/GTF2H5, which is active in NER. The core complex associates with the 3-subunit CDK-activating kinase (CAK) module composed of CYCH1/cyclin H1, CDKD and MAT1/At4g30820 to form the 10-subunit holoenzyme (holo-TFIIH) active in transcription. Interacts with XPD.

The protein resides in the nucleus. In terms of biological role, component of the general transcription and DNA repair factor IIH (TFIIH) core complex, which is involved in general and transcription-coupled nucleotide excision repair (NER) of damaged DNA and, when complexed to CAK, in RNA transcription by RNA polymerase II. In NER, TFIIH acts by opening DNA around the lesion to allow the excision of the damaged oligonucleotide and its replacement by a new DNA fragment. In transcription, TFIIH has an essential role in transcription initiation. When the pre-initiation complex (PIC) has been established, TFIIH is required for promoter opening and promoter escape. Phosphorylation of the C-terminal tail (CTD) of the largest subunit of RNA polymerase II by the kinase module CAK controls the initiation of transcription. Can restore UV resistance in the NER-deficient ssl1-1 yeast mutant. The protein is General transcription factor IIH subunit 2 of Arabidopsis thaliana (Mouse-ear cress).